Here is an 88-residue protein sequence, read N- to C-terminus: Beta-insect excitatory toxin LqhIT1d (88 aa).

The signal sequence occupies residues 1-18 (MKFFLLFLVVLPIMGVLG). Residues 20-83 (KNGFAVDSNG…ISDTRKKLCD (64 aa)) enclose the LCN-type CS-alpha/beta domain. 4 cysteine pairs are disulfide-bonded: Cys34–Cys55, Cys40–Cys60, Cys44–Cys62, and Cys56–Cys82.

It belongs to the long (4 C-C) scorpion toxin superfamily. Sodium channel inhibitor family. Beta subfamily. As to expression, expressed by the venom gland.

Its subcellular location is the secreted. Excitatory insect toxins induce a spastic paralysis. They bind voltage-independently at site-4 of sodium channels (Nav) and shift the voltage of activation toward more negative potentials thereby affecting sodium channel activation and promoting spontaneous and repetitive firing. The chain is Beta-insect excitatory toxin LqhIT1d from Leiurus hebraeus (Hebrew deathstalker scorpion).